Reading from the N-terminus, the 641-residue chain is MAMIGALPKELAEAVSTSRLLVVGAGGIGCELLKNLVLTGFINLDVIDLDTIDVSNLNRQFLFQKKHVGRSKAQVAKESVLQFCPEANITAYHDSIMNPDYNVEFFKQFTMVMNALDNNAARNHVNRMCLAAGIPLIESGTAGYLGQVTVVKKGVTECYECQPKPTQKTFPGCTIRNTPSEPIHCIVWAKYLFNQLFGEEDADQEVAPDIADPEAAWDPTQAAERANASNVDGDIKRVSTKQWAKSTGYDPIKLFNKLFRDDIKYLLTMDRLWRKRKPPVPLEWSSLHNKENCSETQNESSLQGLKDQKVLDVTSCAQLFSKSVETLREQLREKGNGAELVWDKDDPPAMDFVTAAANLRMHIFSMNMKSRFDVKSMAGNIIPAIATTNAVISGLIVLEGLKILSGNTEQCRTVFLNKQPNPRKKLLVPCSLDPPNPSCYVCAIKPEVTVKLNVHKVTVQMLQDKILKEKFAMVAPDVQIEDGKGTILISSEAGETDANNNRKISEFGIRNSSQLQADDFLQDYTLMINILHSDEMEKDVDFEVVGDVPEKGPQKPSEQSVKNITNGSDDGAQPSTSKAQDQDDVLIVDSDEESPSSSNADINMDSASLKRKLPEEETISSTKRKRLEPPVEEDDDIIALD.

Residues 24-29, Asp-48, 56-59, Lys-72, 95-96, and 117-122 contribute to the ATP site; these read GAGGIG, NLNR, SI, and DNNAAR. Zn(2+) is bound by residues Cys-158 and Cys-161. Catalysis depends on Cys-173, which acts as the Glycyl thioester intermediate. Lys-190 participates in a covalent cross-link: Glycyl lysine isopeptide (Lys-Gly) (interchain with G-Cter in SUMO). A Glycyl lysine isopeptide (Lys-Gly) (interchain with G-Cter in SUMO1) cross-link involves residue Lys-236. Residues Lys-257 and Lys-275 each participate in a glycyl lysine isopeptide (Lys-Gly) (interchain with G-Cter in SUMO) cross-link. Residues Cys-439 and Cys-442 each contribute to the Zn(2+) site. The tract at residues 546-641 is disordered; that stretch reads GDVPEKGPQK…EEDDDIIALD (96 aa). The span at 556 to 579 shows a compositional bias: polar residues; it reads PSEQSVKNITNGSDDGAQPSTSKA. The span at 582–594 shows a compositional bias: acidic residues; sequence QDDVLIVDSDEES. Residues Lys-610, Lys-612, and Lys-623 each participate in a glycyl lysine isopeptide (Lys-Gly) (interchain with G-Cter in SUMO) cross-link. The span at 630–641 shows a compositional bias: acidic residues; it reads PVEEDDDIIALD.

The protein belongs to the ubiquitin-activating E1 family. Heterodimer of sae1 and uba2/sae2. The heterodimer corresponds to the two domains that are encoded on a single polypeptide chain in ubiquitin-activating enzyme E1. Interacts with ube2i. Post-translationally, sumoylated with SUMO1 and SUMO2/3 and by UBC9. Sumoylation at Lys-236 inhibits enzymatic activity. Sumoylation at the C-terminal lysine cluster plays an essential role in nuclear trafficking.

It is found in the cytoplasm. It localises to the nucleus. It functions in the pathway protein modification; protein sumoylation. Its function is as follows. The heterodimer acts as an E1 ligase for sumo1, sumo2, and sumo3. It mediates ATP-dependent activation of sumo proteins followed by formation of a thioester bond between a sumo protein and a conserved active site cysteine residue on uba2/sae2. The polypeptide is SUMO-activating enzyme subunit 2 (uba2) (Xenopus tropicalis (Western clawed frog)).